Reading from the N-terminus, the 389-residue chain is Maintenance of mitochondrial morphology protein 1-1 (389 aa).

Residues 1–22 (MSQFVLPAVASEGIINWPFLTG) lie on the Lumenal side of the membrane. A helical transmembrane segment spans residues 23-43 (FMLGQFSVGLVLLIFVRFFIF). Over 44 to 389 (SDQTEPDINT…YRSLQTSPRR (346 aa)) the chain is Cytoplasmic. Residues 83–278 (QPESLDWFSV…YPEYQQFELP (196 aa)) enclose the SMP-LTD domain. Disordered regions lie at residues 283–345 (KTSA…PKFI) and 360–389 (FYEM…SPRR). Over residues 330–341 (MSMSSQRPNINN) the composition is skewed to polar residues.

The protein belongs to the MMM1 family. In terms of assembly, homodimer. Component of the ER-mitochondria encounter structure (ERMES) or MDM complex, composed of MMM1, MDM10, MDM12 and MDM34. An MMM1 homodimer associates with one molecule of MDM12 on each side in a pairwise head-to-tail manner, and the SMP-LTD domains of MMM1 and MDM12 generate a continuous hydrophobic tunnel for phospholipid trafficking.

It is found in the endoplasmic reticulum membrane. In terms of biological role, component of the ERMES/MDM complex, which serves as a molecular tether to connect the endoplasmic reticulum (ER) and mitochondria. Components of this complex are involved in the control of mitochondrial shape and protein biogenesis, and function in nonvesicular lipid trafficking between the ER and mitochondria. The MDM12-MMM11 subcomplex functions in the major beta-barrel assembly pathway that is responsible for biogenesis of all outer membrane beta-barrel proteins, and acts in a late step after the SAM complex. The MDM10-MDM12-MMM1 subcomplex further acts in the TOM40-specific pathway after the action of the MDM12-MMM1 complex. Essential for establishing and maintaining the structure of mitochondria and maintenance of mtDNA nucleoids. In Yarrowia lipolytica (strain CLIB 122 / E 150) (Yeast), this protein is Maintenance of mitochondrial morphology protein 1-1.